The sequence spans 61 residues: Small ribosomal subunit protein uS14 (61 aa).

Zn(2+) is bound by residues C24, C27, C40, and C43.

Belongs to the universal ribosomal protein uS14 family. Zinc-binding uS14 subfamily. Part of the 30S ribosomal subunit. Contacts proteins S3 and S10. Zn(2+) is required as a cofactor.

Its function is as follows. Binds 16S rRNA, required for the assembly of 30S particles and may also be responsible for determining the conformation of the 16S rRNA at the A site. The polypeptide is Small ribosomal subunit protein uS14 (Desulfatibacillum aliphaticivorans).